Here is a 229-residue protein sequence, read N- to C-terminus: Transcriptional regulatory protein CreB (229 aa).

Residues T5 to L119 enclose the Response regulatory domain. Residue D54 is modified to 4-aspartylphosphate. Residues S129 to G228 constitute a DNA-binding region (ompR/PhoB-type).

Post-translationally, phosphorylated by CreC.

The protein localises to the cytoplasm. Functionally, member of the two-component regulatory system CreC/CreB involved in catabolic regulation. The protein is Transcriptional regulatory protein CreB (creB) of Escherichia coli (strain K12).